Here is a 270-residue protein sequence, read N- to C-terminus: Putative methylsterol monooxygenase DDB_G0269788 (270 aa).

The next 3 membrane-spanning stretches (helical) occupy residues 31-51 (FIAHEVFYFGSFIPFFLCDFM), 82-102 (IFVQLPMMYIFDPAIKAIGLS), and 110-130 (IPYLIFTIACCFLIEDFYFYW). Positions 118–249 (ACCFLIEDFY…FTYLDKIFGT (132 aa)) constitute a Fatty acid hydroxylase domain. The Histidine box-1 motif lies at 132 to 136 (HRALH). A Histidine box-2 motif is present at residues 145–149 (HKVHH). The short motif at 224–230 (FHDFHHE) is the Histidine box-3 element.

Belongs to the sterol desaturase family. It depends on Fe cation as a cofactor.

The protein localises to the endoplasmic reticulum membrane. It carries out the reaction 4,4-dimethyl-5alpha-cholest-7-en-3beta-ol + 6 Fe(II)-[cytochrome b5] + 3 O2 + 5 H(+) = 4alpha-carboxy-4beta-methyl-5alpha-cholest-7-ene-3beta-ol + 6 Fe(III)-[cytochrome b5] + 4 H2O. The protein operates within steroid biosynthesis; zymosterol biosynthesis; zymosterol from lanosterol: step 3/6. The polypeptide is Putative methylsterol monooxygenase DDB_G0269788 (Dictyostelium discoideum (Social amoeba)).